Here is an 848-residue protein sequence, read N- to C-terminus: Probable serine/threonine-protein kinase DDB_G0278535 (848 aa).

3 stretches are compositionally biased toward low complexity: residues 1 to 52 (MNKS…NNNH), 60 to 85 (TAAT…TSST), and 95 to 116 (TSNS…VSTS). The tract at residues 1 to 117 (MNKSSSASTV…SSSPQVSTSV (117 aa)) is disordered. 5 ANK repeats span residues 181-212 (MDQT…KMDI), 218-248 (SGYT…NVNI), 252-285 (DKNS…NVNA), 289-320 (NGET…EVNV), and 324-353 (RGES…DITI). The 64-residue stretch at 378 to 441 (KNVQDIFNWL…IRNCRILRDQ (64 aa)) folds into the SAM domain. The tract at residues 448–478 (NSNVTTGSGSSGSTTTTTTTTTTTSGCGGLN) is disordered. A compositionally biased stretch (low complexity) spans 452-472 (TTGSGSSGSTTTTTTTTTTTS). The Protein kinase domain maps to 529–799 (LEYTLKLGSG…TLNRLRHEYM (271 aa)). ATP is bound by residues 535–543 (LGSGSSGKV) and lysine 556. The active-site Proton acceptor is aspartate 650. The tract at residues 810 to 848 (RKLPSLSPPPQPTTTTTTTTSSSTSTNNINNNINNNNNT) is disordered. Over residues 822–848 (TTTTTTTTSSSTSTNNINNNINNNNNT) the composition is skewed to low complexity.

The protein belongs to the protein kinase superfamily. TKL Ser/Thr protein kinase family.

It carries out the reaction L-seryl-[protein] + ATP = O-phospho-L-seryl-[protein] + ADP + H(+). The enzyme catalyses L-threonyl-[protein] + ATP = O-phospho-L-threonyl-[protein] + ADP + H(+). The polypeptide is Probable serine/threonine-protein kinase DDB_G0278535 (Dictyostelium discoideum (Social amoeba)).